A 268-amino-acid polypeptide reads, in one-letter code: Riboflavin transport system permease protein RibX (268 aa).

Helical transmembrane passes span 24 to 44 (ALGLPVTLMLLLVFWQAGVTL), 76 to 96 (LATLSAALGGFTLALIIALIL), 119 to 139 (AIPVVAVAPLIILWFGAGLTS), 140 to 160 (KVLVAALITFLPILINTVVAI), 185 to 205 (VEAPLALPVLFGGVRTGLALA), and 236 to 256 (LIFVALATLALITLTLYVLAG). An ABC transmembrane type-1 domain is found at 75 to 255 (TLATLSAALG…LITLTLYVLA (181 aa)).

This sequence belongs to the binding-protein-dependent transport system permease family. As to quaternary structure, the complex is likely composed of an ATP-binding protein, a transmembrane protein (RibX) and a solute-binding protein (RibY).

The protein localises to the cell membrane. In terms of biological role, part of an ABC transporter complex that transports riboflavin into the cell. This Chloroflexus aurantiacus (strain ATCC 29366 / DSM 635 / J-10-fl) protein is Riboflavin transport system permease protein RibX.